Here is a 300-residue protein sequence, read N- to C-terminus: 3-hydroxy-3-isohexenylglutaryl-CoA/hydroxy-methylglutaryl-CoA lyase (300 aa).

One can recognise a Pyruvate carboxyltransferase domain in the interval 7–274 (VRLVEVGPRD…HTGVDMHALV (268 aa)). Arg15 lines the substrate pocket. Asp16, His207, and His209 together coordinate a divalent metal cation. Cys240 is an active-site residue. Asn249 contacts a divalent metal cation.

This sequence belongs to the HMG-CoA lyase family. In terms of assembly, homodimer. Requires Mg(2+) as cofactor. It depends on Mn(2+) as a cofactor.

The catalysed reaction is 3-hydroxy-3-(4-methylpent-3-en-1-yl)glutaryl-CoA = 7-methyl-3-oxooct-6-enoyl-CoA + acetate. The enzyme catalyses (3S)-3-hydroxy-3-methylglutaryl-CoA = acetoacetate + acetyl-CoA. It participates in metabolic intermediate metabolism; (S)-3-hydroxy-3-methylglutaryl-CoA degradation; acetoacetate from (S)-3-hydroxy-3-methylglutaryl-CoA: step 1/1. Functionally, involved in the L-leucine, isovalerate and acyclic monoterpene catabolism. Catalyzes the cleavage of 3-hydroxy-3-methylglutaryl-CoA (HMG-CoA) to yield acetyl-CoA and acetoacetate. It can also catalyze the cleavage of 3-hydroxy-3-isohexenylglutaryl-CoA (HIHG_CoA) to yield 7-methyl-3-oxooct-6-enoyl-CoA and acetate. This Pseudomonas aeruginosa (strain ATCC 15692 / DSM 22644 / CIP 104116 / JCM 14847 / LMG 12228 / 1C / PRS 101 / PAO1) protein is 3-hydroxy-3-isohexenylglutaryl-CoA/hydroxy-methylglutaryl-CoA lyase.